Reading from the N-terminus, the 1176-residue chain is Myosin light chain kinase, smooth muscle (1176 aa).

Residues Met-1–Pro-41 are actin-binding (calcium/calmodulin-sensitive). The tract at residues Met-1–Thr-354 is disordered. The interval Pro-26–Pro-41 is calmodulin-binding. A compositionally biased stretch (pro residues) spans Thr-43–Ala-55. A run of 16 repeats spans residues Phe-100 to Asp-111, Thr-112 to Glu-123, Thr-124 to Glu-135, Thr-136 to Glu-147, Thr-148 to Glu-159, Thr-160 to Glu-171, Thr-172 to Glu-183, Thr-184 to Glu-195, Thr-196 to Glu-207, Thr-208 to Glu-219, Thr-220 to Glu-231, Thr-232 to Glu-243, Thr-244 to Glu-255, Thr-256 to Glu-267, Thr-268 to Glu-279, and Thr-280 to Glu-291. Residues Phe-100–Glu-291 form a 16 X 12 AA tandem repeats region. Ser-202 carries the phosphoserine modification. An actin-binding (calcium/calmodulin-insensitive) region spans residues Pro-319–Val-721. Residues Thr-320 to Cys-335 show a composition bias toward basic and acidic residues. An Ig-like C2-type 1 domain is found at Pro-356–Thr-444. Cys-377 and Cys-428 are oxidised to a cystine. The tract at residues Pro-448 to Pro-497 is disordered. Residues Pro-498–Thr-586 enclose the Ig-like C2-type 2 domain. One can recognise a Fibronectin type-III domain in the interval Pro-594–Glu-686. The tract at residues Ser-673–Glu-707 is disordered. A compositionally biased stretch (acidic residues) spans Pro-688–Pro-706. A Phosphoserine modification is found at Ser-699. Tyr-710 bears the Phosphotyrosine; by ABL1 mark. The Protein kinase domain maps to Tyr-725 to Leu-980. ATP contacts are provided by residues Leu-731–Val-739 and Lys-754. Position 836 is a phosphotyrosine; by ABL1 (Tyr-836). Asp-846 (proton acceptor) is an active-site residue. At Tyr-896 the chain carries Phosphotyrosine; by ABL1. The segment at Thr-972–Thr-1035 is calmodulin-binding. Phosphoserine is present on residues Ser-1020, Ser-1021, Ser-1033, Ser-1034, and Ser-1037. Thr-1039 bears the Phosphothreonine mark. Position 1040 is a phosphoserine (Ser-1040). An Ig-like C2-type 3 domain is found at Pro-1069–Ile-1158. The cysteines at positions 1090 and 1142 are disulfide-linked.

It belongs to the protein kinase superfamily. CAMK Ser/Thr protein kinase family. In terms of assembly, all isoforms including Telokin bind calmodulin. Interacts with SVIL. Interacts with CTTN; this interaction is reduced during thrombin-induced endothelial cell (EC) contraction but is promoted by the barrier-protective agonist sphingosine 1-phosphate (S1P) within lamellipodia. A complex made of ABL1, CTTN and MYLK regulates cortical actin-based cytoskeletal rearrangement critical to sphingosine 1-phosphate (S1P)-mediated endothelial cell (EC) barrier enhancement. Binds to NAA10/ARD1 and PTK2B/PYK2. Mg(2+) serves as cofactor. Ca(2+) is required as a cofactor. Post-translationally, the C-terminus is deglutamylated by AGTPBP1/CCP1, AGBL1/CCP4 and AGBL4/CCP6, leading to the formation of Myosin light chain kinase, smooth muscle, deglutamylated form. The consequences of C-terminal deglutamylation are unknown. Can probably be down-regulated by phosphorylation. Tyrosine phosphorylation by ABL1 increases kinase activity, reverses MLCK-mediated inhibition of Arp2/3-mediated actin polymerization, and enhances CTTN-binding. Phosphorylation by SRC promotes CTTN binding.

It is found in the cytoplasm. The protein resides in the cell projection. The protein localises to the lamellipodium. Its subcellular location is the cleavage furrow. It localises to the cytoskeleton. It is found in the stress fiber. It carries out the reaction L-seryl-[myosin light chain] + ATP = O-phospho-L-seryl-[myosin light chain] + ADP + H(+). The enzyme catalyses L-threonyl-[myosin light chain] + ATP = O-phospho-L-threonyl-[myosin light chain] + ADP + H(+). Calcium/calmodulin-dependent myosin light chain kinase implicated in smooth muscle contraction via phosphorylation of myosin light chains (MLC). Also regulates actin-myosin interaction through a non-kinase activity. Phosphorylates PTK2B/PYK2 and myosin light-chains. Involved in the inflammatory response (e.g. apoptosis, vascular permeability, leukocyte diapedesis), cell motility and morphology, airway hyperreactivity and other activities relevant to asthma. Required for tonic airway smooth muscle contraction that is necessary for physiological and asthmatic airway resistance. Necessary for gastrointestinal motility. Implicated in the regulation of endothelial as well as vascular permeability, probably via the regulation of cytoskeletal rearrangements. In the nervous system it has been shown to control the growth initiation of astrocytic processes in culture and to participate in transmitter release at synapses formed between cultured sympathetic ganglion cells. Critical participant in signaling sequences that result in fibroblast apoptosis. Plays a role in the regulation of epithelial cell survival. Required for epithelial wound healing, especially during actomyosin ring contraction during purse-string wound closure. Mediates RhoA-dependent membrane blebbing. Triggers TRPC5 channel activity in a calcium-dependent signaling, by inducing its subcellular localization at the plasma membrane. Promotes cell migration (including tumor cells) and tumor metastasis. PTK2B/PYK2 activation by phosphorylation mediates ITGB2 activation and is thus essential to trigger neutrophil transmigration during acute lung injury (ALI). May regulate optic nerve head astrocyte migration. Probably involved in mitotic cytoskeletal regulation. Regulates tight junction probably by modulating ZO-1 exchange in the perijunctional actomyosin ring. Mediates burn-induced microvascular barrier injury; triggers endothelial contraction in the development of microvascular hyperpermeability by phosphorylating MLC. Essential for intestinal barrier dysfunction. Mediates Giardia spp.-mediated reduced epithelial barrier function during giardiasis intestinal infection via reorganization of cytoskeletal F-actin and tight junctional ZO-1. Necessary for hypotonicity-induced Ca(2+) entry and subsequent activation of volume-sensitive organic osmolyte/anion channels (VSOAC) in cervical cancer cells. The polypeptide is Myosin light chain kinase, smooth muscle (MYLK) (Bos taurus (Bovine)).